Here is a 221-residue protein sequence, read N- to C-terminus: Ependymin (221 aa).

An N-terminal signal peptide occupies residues 1-21; it reads MQAFAVAALSIWLCLGATTLA. N-linked (GlcNAc...) asparagine glycans are attached at residues Asn37, Asn77, and Asn101.

Belongs to the ependymin family. As to quaternary structure, forms disulfide-linked dimers. Binds calcium through the terminal sialic acids. In terms of tissue distribution, EPDs are synthesized in the meninx and secreted in the cerebrospinal fluid.

The protein localises to the secreted. Its function is as follows. May play a role in neural plasticity. May be involved during axon regeneration. The protein is Ependymin (epd) of Esox lucius (Northern pike).